Reading from the N-terminus, the 226-residue chain is MDWGTLQTILGGVNKHSTSIGKIWLTVLFIFRIMILVVAAKEVWGDEQADFVCNTLQPGCKNVCYDHYFPISHIRLWALQLIFVSTPALLVAMHVAYRRHEKKRKFIKGEIKSEFKDIEEIKTQKVRIEGSLWWTYTSSIFFRVIFEAAFMYVFYVMYDGFSMQRLVKCNAWPCPNTVDCFVSRPTEKTVFTVFMIAVSGICILLNVTELCYLLIRYCSGKSKKPV.

An intramembrane segment occupies Asp-2–Val-13. Residues Asn-14 to Ile-20 lie on the Cytoplasmic side of the membrane. The helical transmembrane segment at Gly-21–Ala-40 threads the bilayer. At Lys-41–His-73 the chain is on the extracellular side. Ca(2+) contacts are provided by Glu-42, Gly-45, and Glu-47. Cystine bridges form between Cys-53/Cys-180, Cys-60/Cys-174, and Cys-64/Cys-169. The chain crosses the membrane as a helical span at residues Ile-74–His-94. The Cytoplasmic portion of the chain corresponds to Val-95–Thr-135. A helical transmembrane segment spans residues Tyr-136–Val-156. Topologically, residues Met-157 to Thr-189 are extracellular. The chain crosses the membrane as a helical span at residues Val-190 to Leu-210. The Cytoplasmic portion of the chain corresponds to Cys-211 to Val-226.

It belongs to the connexin family. Beta-type (group I) subfamily. As to quaternary structure, a hemichannel or connexon is composed of a hexamer of connexins. A functional gap junction is formed by the apposition of two hemichannels. Forms heteromeric channels with GJB4. Interacts with CNST.

The protein resides in the cell membrane. Its subcellular location is the cell junction. It is found in the gap junction. In terms of biological role, structural component of gap junctions. Gap junctions are dodecameric channels that connect the cytoplasm of adjoining cells. They are formed by the docking of two hexameric hemichannels, one from each cell membrane. Small molecules and ions diffuse from one cell to a neighboring cell via the central pore. This Gorilla gorilla gorilla (Western lowland gorilla) protein is Gap junction beta-2 protein (GJB2).